We begin with the raw amino-acid sequence, 184 residues long: Signal peptidase complex subunit 3 (184 aa).

Residues 1–14 lie on the Cytoplasmic side of the membrane; sequence MFSFVQRFQNVSNQ. The helical; Signal-anchor for type II membrane protein transmembrane segment at 15-35 threads the bilayer; sequence AFSMGIVMVVFIMASSYYQLI. Topologically, residues 36 to 184 are lumenal; the sequence is NNNAFSVPSN…TLTVENKNKV (149 aa). Asparagine 102 and asparagine 173 each carry an N-linked (GlcNAc...) asparagine glycan.

This sequence belongs to the SPCS3 family. As to quaternary structure, component of the signal peptidase complex (SPC) composed of a catalytic subunit SEC11 and three accessory subunits SPC1, SPC2 and SPC3. The complex induces a local thinning of the ER membrane which is used to measure the length of the signal peptide (SP) h-region of protein substrates. This ensures the selectivity of the complex towards h-regions shorter than 18-20 amino acids. Interacts with SEC11. SPC associates with the translocon complex.

The protein resides in the endoplasmic reticulum membrane. Its function is as follows. Essential component of the signal peptidase complex (SPC) which catalyzes the cleavage of N-terminal signal sequences from nascent proteins as they are translocated into the lumen of the endoplasmic reticulum. Essential for the SPC catalytic activity, possibly by stabilizing and positioning the active center of the complex close to the lumenal surface. Essential for viability. The polypeptide is Signal peptidase complex subunit 3 (SPC3) (Saccharomyces cerevisiae (strain ATCC 204508 / S288c) (Baker's yeast)).